The chain runs to 1755 residues: Transposon Ty1-DR5 Gag-Pol polyprotein (1755 aa).

Composition is skewed to polar residues over residues 1–10, 48–60, and 127–152; these read MESQQLSNYP, TKANSQQTTTPAS, and QSQFPQYPSSVGTPLSTPSPESGNTF. Disordered stretches follow at residues 1 to 93, 126 to 173, and 352 to 421; these read MESQ…MMTQ, PQSQ…RPPP, and GSRN…SKST. Residues 153–165 are compositionally biased toward low complexity; sequence TDSSSADSDMTST. The segment at 299 to 401 is RNA-binding; it reads NNGIHINNKV…NSKSKTARAH (103 aa). The segment covering 402–418 has biased composition (low complexity); the sequence is NVSTSNNSPSTDNDSIS. The For protease activity; shared with dimeric partner role is filled by Asp-461. The tract at residues 583–640 is integrase-type zinc finger-like; that stretch reads NVHTSESTRKYPYPFIHRMLAHANAQTIRYSLKNNTITYFNESDVDWSSAIDYQCPDC. Positions 660 to 835 constitute an Integrase catalytic domain; that stretch reads NSYEPFQYLH…AGLDISTLLP (176 aa). Residues Asp-671 and Asp-736 each contribute to the Mg(2+) site. 3 disordered regions span residues 956-1087, 1092-1111, and 1130-1187; these read SKAV…ETEK, RSPSIDASPPENNSSHNIVP, and DLPL…DNET. Residues 960 to 969 show a composition bias toward low complexity; it reads SPTDSTPPST. A compositionally biased stretch (polar residues) spans 1005-1015; the sequence is STPQISNIEST. A compositionally biased stretch (basic and acidic residues) spans 1038-1053; that stretch reads ESSHASKSKDFRHSDS. Composition is skewed to polar residues over residues 1054–1082 and 1101–1111; these read YSENETNHTNVPISSTGGTNNKTVPQISD and PENNSSHNIVP. A Bipartite nuclear localization signal motif is present at residues 1178–1212; that stretch reads KKRSLEDNETEIKVSRDTWNTKNMRSLEPPRSKKR. The region spanning 1338–1476 is the Reverse transcriptase Ty1/copia-type domain; the sequence is NNYYITQLDI…DILGLEIKYQ (139 aa). Residues Asp-1346, Asp-1427, Asp-1428, Asp-1610, Glu-1652, and Asp-1685 each coordinate Mg(2+). The 143-residue stretch at 1610-1752 folds into the RNase H Ty1/copia-type domain; it reads DASYGNQPYY…IKTFKLLTNK (143 aa).

The capsid protein forms a homotrimer, from which the VLPs are assembled. The protease is a homodimer, whose active site consists of two apposed aspartic acid residues. Post-translationally, initially, virus-like particles (VLPs) are composed of the structural unprocessed proteins Gag and Gag-Pol, and also contain the host initiator methionine tRNA (tRNA(i)-Met) which serves as a primer for minus-strand DNA synthesis, and a dimer of genomic Ty RNA. Processing of the polyproteins occurs within the particle and proceeds by an ordered pathway, called maturation. First, the protease (PR) is released by autocatalytic cleavage of the Gag-Pol polyprotein yielding capsid protein p45 and a Pol-p154 precursor protein. This cleavage is a prerequisite for subsequent processing of Pol-p154 at the remaining sites to release the mature structural and catalytic proteins. Maturation takes place prior to the RT reaction and is required to produce transposition-competent VLPs.

The protein resides in the cytoplasm. Its subcellular location is the nucleus. The catalysed reaction is DNA(n) + a 2'-deoxyribonucleoside 5'-triphosphate = DNA(n+1) + diphosphate. It carries out the reaction Endonucleolytic cleavage to 5'-phosphomonoester.. Capsid protein (CA) is the structural component of the virus-like particle (VLP), forming the shell that encapsulates the retrotransposons dimeric RNA genome. The particles are assembled from trimer-clustered units and there are holes in the capsid shells that allow for the diffusion of macromolecules. CA also has nucleocapsid-like chaperone activity, promoting primer tRNA(i)-Met annealing to the multipartite primer-binding site (PBS), dimerization of Ty1 RNA and initiation of reverse transcription. Functionally, the aspartyl protease (PR) mediates the proteolytic cleavages of the Gag and Gag-Pol polyproteins after assembly of the VLP. In terms of biological role, reverse transcriptase/ribonuclease H (RT) is a multifunctional enzyme that catalyzes the conversion of the retro-elements RNA genome into dsDNA within the VLP. The enzyme displays a DNA polymerase activity that can copy either DNA or RNA templates, and a ribonuclease H (RNase H) activity that cleaves the RNA strand of RNA-DNA heteroduplexes during plus-strand synthesis and hydrolyzes RNA primers. The conversion leads to a linear dsDNA copy of the retrotransposon that includes long terminal repeats (LTRs) at both ends. Its function is as follows. Integrase (IN) targets the VLP to the nucleus, where a subparticle preintegration complex (PIC) containing at least integrase and the newly synthesized dsDNA copy of the retrotransposon must transit the nuclear membrane. Once in the nucleus, integrase performs the integration of the dsDNA into the host genome. The polypeptide is Transposon Ty1-DR5 Gag-Pol polyprotein (TY1B-DR5) (Saccharomyces cerevisiae (strain ATCC 204508 / S288c) (Baker's yeast)).